Reading from the N-terminus, the 155-residue chain is Ribonuclease H (155 aa).

The RNase H type-1 domain occupies 1 to 146 (MPELFAYTDG…ADELARAGMK (146 aa)). Residues D9, E52, D74, and D138 each coordinate Mg(2+).

This sequence belongs to the RNase H family. As to quaternary structure, monomer. Mg(2+) is required as a cofactor.

The protein localises to the cytoplasm. It carries out the reaction Endonucleolytic cleavage to 5'-phosphomonoester.. In terms of biological role, endonuclease that specifically degrades the RNA of RNA-DNA hybrids. This is Ribonuclease H from Ruegeria pomeroyi (strain ATCC 700808 / DSM 15171 / DSS-3) (Silicibacter pomeroyi).